Consider the following 126-residue polypeptide: Large ribosomal subunit protein bL12 (126 aa).

The protein belongs to the bacterial ribosomal protein bL12 family. In terms of assembly, homodimer. Part of the ribosomal stalk of the 50S ribosomal subunit. Forms a multimeric L10(L12)X complex, where L10 forms an elongated spine to which 2 to 4 L12 dimers bind in a sequential fashion. Binds GTP-bound translation factors.

Its function is as follows. Forms part of the ribosomal stalk which helps the ribosome interact with GTP-bound translation factors. Is thus essential for accurate translation. This chain is Large ribosomal subunit protein bL12, found in Bifidobacterium longum (strain DJO10A).